The primary structure comprises 282 residues: Succinate dehydrogenase [ubiquinone] iron-sulfur subunit, mitochondrial (282 aa).

A mitochondrion-targeting transit peptide spans 1–30 (MAATVGVSLKRGFPAAVLGRVGLQFQACRG). The region spanning 42-135 (KKFAIYRWDP…VSKIYPLPHM (94 aa)) is the 2Fe-2S ferredoxin-type domain. 2 positions are modified to N6-acetyllysine: K53 and K57. [2Fe-2S] cluster contacts are provided by C95, C100, C103, and C115. Residues 148-220 (FYAQYKSIEP…PAVLMQAYRW (73 aa)) form an interaction with SDHAF1 region. Residues 178-208 (DREKLDGLYECILCACCSTSCPSYWWNGDKY) enclose the 4Fe-4S ferredoxin-type domain. [4Fe-4S] cluster contacts are provided by C188, C191, and C194. A [3Fe-4S] cluster-binding site is contributed by C198. W203 lines the a ubiquinone pocket. Residues C245 and C251 each coordinate [3Fe-4S] cluster. C255 provides a ligand contact to [4Fe-4S] cluster.

Belongs to the succinate dehydrogenase/fumarate reductase iron-sulfur protein family. Component of complex II composed of four subunits: the flavoprotein (FP) SDHA, iron-sulfur protein (IP) SDHB, and a cytochrome b560 composed of SDHC and SDHD. Interacts with SDHAF1; the interaction is required for iron-sulfur cluster incorporation into SDHB. [2Fe-2S] cluster serves as cofactor. [3Fe-4S] cluster is required as a cofactor. It depends on [4Fe-4S] cluster as a cofactor.

Its subcellular location is the mitochondrion inner membrane. The catalysed reaction is a quinone + succinate = fumarate + a quinol. It carries out the reaction (R)-malate + a quinone = enol-oxaloacetate + a quinol. It catalyses the reaction (S)-malate + a quinone = enol-oxaloacetate + a quinol. Its pathway is carbohydrate metabolism; tricarboxylic acid cycle; fumarate from succinate (eukaryal route): step 1/1. Its activity is regulated as follows. Enol-oxaloacetate inhibits the succinate dehydrogenase activity. Its function is as follows. Iron-sulfur protein (IP) subunit of the succinate dehydrogenase complex (mitochondrial respiratory chain complex II), responsible for transferring electrons from succinate to ubiquinone (coenzyme Q). SDH also oxidizes malate to the non-canonical enol form of oxaloacetate, enol-oxaloacetate. Enol-oxaloacetate, which is a potent inhibitor of the succinate dehydrogenase activity, is further isomerized into keto-oxaloacetate. The polypeptide is Succinate dehydrogenase [ubiquinone] iron-sulfur subunit, mitochondrial (Sdhb) (Mus musculus (Mouse)).